The sequence spans 309 residues: High-affinity zinc uptake system protein AztC (309 aa).

The signal sequence occupies residues 1–24 (MKDWLFRIATCSIMTFSSLAAAQA). Zn(2+) is bound at residue histidine 61. Positions 117-132 (GGGHYHYIDGKAVFHA) are D-loop. Histidine 138 lines the Zn(2+) pocket. A disulfide bond links cysteine 158 and cysteine 165. Histidine 204 contributes to the Zn(2+) binding site. The Z-loop stretch occupies residues 222 to 229 (QGVSTESE). Aspartate 279 lines the Zn(2+) pocket.

The protein belongs to the bacterial solute-binding protein 9 family. In terms of assembly, monomer.

Its subcellular location is the periplasm. In terms of biological role, part of the ATP-binding cassette (ABC) transport system AztABCD involved in zinc import. Binds zinc with high affinity and specificity and delivers it to the membrane permease for translocation into the cytoplasm. This Paracoccus denitrificans (strain Pd 1222) protein is High-affinity zinc uptake system protein AztC.